The chain runs to 180 residues: Cytidylate kinase (180 aa).

An ATP-binding site is contributed by 7-15 (GLPGSGTTT).

This sequence belongs to the cytidylate kinase family. Type 2 subfamily.

It localises to the cytoplasm. It carries out the reaction CMP + ATP = CDP + ADP. It catalyses the reaction dCMP + ATP = dCDP + ADP. This chain is Cytidylate kinase, found in Methanosarcina barkeri (strain Fusaro / DSM 804).